The primary structure comprises 314 residues: DNA-directed RNA polymerase subunit alpha (314 aa).

The tract at residues 1–228 is alpha N-terminal domain (alpha-NTD); sequence MAQFHYECVE…SLFEPLKDIT (228 aa). The tract at residues 240–314 is alpha C-terminal domain (alpha-CTD); the sequence is DPTSQIPIEE…LPQEKVAKAT (75 aa).

This sequence belongs to the RNA polymerase alpha chain family. As to quaternary structure, in cyanobacteria the RNAP catalytic core is composed of 2 alpha, 1 beta, 1 beta', 1 gamma and 1 omega subunit. When a sigma factor is associated with the core the holoenzyme is formed, which can initiate transcription.

It catalyses the reaction RNA(n) + a ribonucleoside 5'-triphosphate = RNA(n+1) + diphosphate. Functionally, DNA-dependent RNA polymerase catalyzes the transcription of DNA into RNA using the four ribonucleoside triphosphates as substrates. The protein is DNA-directed RNA polymerase subunit alpha of Trichodesmium erythraeum (strain IMS101).